We begin with the raw amino-acid sequence, 293 residues long: tRNA-cytidine(32) 2-sulfurtransferase (293 aa).

The PP-loop motif motif lies at 71 to 76 (SGGKDS). 3 residues coordinate [4Fe-4S] cluster: C146, C149, and C237.

This sequence belongs to the TtcA family. In terms of assembly, homodimer. It depends on Mg(2+) as a cofactor. The cofactor is [4Fe-4S] cluster.

The protein localises to the cytoplasm. The enzyme catalyses cytidine(32) in tRNA + S-sulfanyl-L-cysteinyl-[cysteine desulfurase] + AH2 + ATP = 2-thiocytidine(32) in tRNA + L-cysteinyl-[cysteine desulfurase] + A + AMP + diphosphate + H(+). The protein operates within tRNA modification. Catalyzes the ATP-dependent 2-thiolation of cytidine in position 32 of tRNA, to form 2-thiocytidine (s(2)C32). The sulfur atoms are provided by the cysteine/cysteine desulfurase (IscS) system. This is tRNA-cytidine(32) 2-sulfurtransferase from Sinorhizobium medicae (strain WSM419) (Ensifer medicae).